Consider the following 162-residue polypeptide: Globin CTT-VI (162 aa).

Residues 1-15 form the signal peptide; sequence MKFLVLALCIAAASA. Residues 17–161 enclose the Globin domain; the sequence is VLTTEQADLV…TYAMLFSAMD (145 aa). Heme b-binding residues include His-75 and His-110.

This sequence belongs to the globin family. In terms of assembly, homodimer.

This Chironomus thummi thummi (Midge) protein is Globin CTT-VI (CTT-6).